The following is a 336-amino-acid chain: Probable allantoicase 2 (336 aa).

Belongs to the allantoicase family.

It catalyses the reaction allantoate + H2O = (S)-ureidoglycolate + urea. The protein operates within nitrogen metabolism; (S)-allantoin degradation; (S)-ureidoglycolate from allantoate (aminidohydrolase route): step 1/1. This chain is Probable allantoicase 2, found in Burkholderia pseudomallei (strain K96243).